Reading from the N-terminus, the 163-residue chain is Norbelladine synthase (163 aa).

68–71 is a binding site for tyramine; that stretch reads YHKE. Lys83 (proton donor) is an active-site residue.

Belongs to the BetVI family. In terms of tissue distribution, mostly expressed in bulbs, and, to a lower extent, in roots, stems, leaves and flowers.

The enzyme catalyses 3,4-dihydroxybenzaldehyde + tyramine + AH2 = norbelladine + A + H2O. It participates in alkaloid biosynthesis. Functionally, catalyzes the condensation of tyramine and 3,4-dihydroxybenzaldehyde (3,4-DHBA) to form norbelladine, the common precursor to all Amaryllidaceae alkaloids such as galanthamine, lycorine and haemanthamine, and including haemanthamine- and crinamine-type alkaloids, promising anticancer agents. The protein is Norbelladine synthase of Narcissus pseudonarcissus (Daffodil).